Reading from the N-terminus, the 205-residue chain is uncharacterized protein (205 aa).

Residues D11–G71 enclose the HTH tetR-type domain. The segment at residues T34–F53 is a DNA-binding region (H-T-H motif).

This is an uncharacterized protein from Bacillus subtilis (strain 168).